The sequence spans 1423 residues: ABC transporter G family member 40 (1423 aa).

Residues Met-1–Val-19 show a composition bias toward polar residues. The interval Met-1–Glu-36 is disordered. The N-linked (GlcNAc...) asparagine glycan is linked to Asn-16. Residues Trp-20–Arg-34 are compositionally biased toward basic and acidic residues. The ABC transporter 1 domain occupies Leu-154–Pro-427. Gly-187–Thr-194 is an ATP binding site. The N-linked (GlcNAc...) asparagine glycan is linked to Asn-376. The ABC transmembrane type-2 1 domain maps to Glu-505–Phe-718. 6 helical membrane passes run Phe-523–Phe-543, Ala-562–Ile-582, Ile-611–Phe-631, Ile-643–Gly-663, Ile-667–Val-687, and Trp-696–Asn-716. Asn-729 is a glycosylation site (N-linked (GlcNAc...) asparagine). The chain crosses the membrane as a helical span at residues Gly-756–Leu-776. One can recognise an ABC transporter 2 domain in the interval Ile-825–Gln-1077. Gly-870 to Thr-877 lines the ATP pocket. N-linked (GlcNAc...) asparagine glycosylation is present at Asn-895. The residue at position 962 (Thr-962) is a Phosphothreonine. Positions Thr-1150–Phe-1364 constitute an ABC transmembrane type-2 2 domain. The next 6 helical transmembrane spans lie at Phe-1174–Lys-1194, Ser-1207–Val-1227, Ile-1257–Phe-1277, Phe-1284–Met-1304, Ile-1314–Ile-1334, and Val-1341–Ala-1361. Asn-1375 carries an N-linked (GlcNAc...) asparagine glycan. The chain crosses the membrane as a helical span at residues Val-1395–Ile-1415.

This sequence belongs to the ABC transporter superfamily. ABCG family. PDR (TC 3.A.1.205) subfamily. Interacts with LECRK91 and LECRK92. In terms of tissue distribution, mostly observed in inflorescence meristems relative to cauline leaves and developing siliques. Ubiquitous with higher levels in leaves, stems and flowers. Also present in primary and lateral roots. In seeds, mainly expressed in the embryo and, to a lesser extent, in the endosperm.

It is found in the cell membrane. It carries out the reaction abscisate(out) + ATP + H2O = abscisate(in) + ADP + phosphate + H(+). Its activity is regulated as follows. Inhibited by glibenclamide, verapamil and vanadate (ABC transporters inhibitors). High affinity abscisic acid (ABA) transporter that mediates the import of ABA, with a preference for (+)-ABA, through the plasma membrane, especially in guard cells, and is involved in the intercellular and intracellular ABA signaling pathways leading, for example, to stomatal closure, thus conferring drought tolerance. Together with ABCG30, import into the embryo the ABA delivered from the endosperm via ABCG25 and ABCG31-mediated export to suppress radicle extension and subsequent embryonic growth. May be a general defense protein. Functions as a pump to exclude Pb(2+) ions and/or Pb(2+)-containing toxic compounds from the cytoplasm. Contributes to Pb(2+) ions resistance. Confers some resistance to the terpene sclareol. Its function is as follows. (Microbial infection) Involved in resistance response to the pathogenic oomycetes Phytophthora infestans and Phytophthora capsici. The polypeptide is ABC transporter G family member 40 (Arabidopsis thaliana (Mouse-ear cress)).